The sequence spans 402 residues: Meiosis-specific cyclin rem1 (402 aa).

Belongs to the cyclin family. Cyclin AB subfamily.

Functionally, required for pre-meiotic DNA synthesis and S phase progression. Regulates levels of meiotic intragenic recombination. The protein is Meiosis-specific cyclin rem1 (rem1) of Schizosaccharomyces pombe (strain 972 / ATCC 24843) (Fission yeast).